A 697-amino-acid polypeptide reads, in one-letter code: Large T antigen (697 aa).

At methionine 1 the chain carries N-acetylmethionine; by host. The 64-residue stretch at 12–75 (ELMDLLQITR…LMEIRSQCGS (64 aa)) folds into the J domain. A binding to host RB1 protein and transforming activity region spans residues 131 to 135 (LFCSE). Phosphoserine; by host occurs at positions 134 and 140. The tract at residues 136–198 (TMSSSSDEDT…PKRKKTEEKK (63 aa)) is disordered. Pro residues predominate over residues 148–158 (AAQPPPPPAPS). A compositionally biased stretch (acidic residues) spans 159 to 169 (PEEEDEIEFVE). Positions 170 to 183 (ETPSSCDGSSSQSS) are enriched in low complexity. Position 187 is a phosphothreonine; by host (threonine 187). The Nuclear localization signal signature appears at 188 to 196 (PPKRKKTEE). The T-ag OBD DNA-binding region spans 203 to 323 (PVCLYSFLSH…EENKPGVSMF (121 aa)). A T-ag D1-type zinc finger spans residues 330–422 (EQSVNWQEIC…KRLKLVECSR (93 aa)). Zn(2+) contacts are provided by cysteine 367, cysteine 370, histidine 378, and histidine 382. The SF3 helicase domain maps to 463–623 (NSWDVFQNIL…AYLKQSLEKS (161 aa)). 489–496 (GPINSGKT) is an ATP binding site.

Forms homohexamers in the presence of ATP. Interacts with host HDAC1. Interacts (via LXCXE domain) with host RB1; the interaction induces the aberrant dissociation of RB1-E2F1 complex thereby disrupting RB1's activity. Interacts (via LXCXE domain) with host pRB-related proteins RBL1 and RBL2. Interacts (via C-terminus) with host TOP1 and POLA1 allowing DNA replication. Interacts with host TP53, inhibiting TP53 binding to DNA. Interacts with host preinitiation complex components TBP, TFIIA and TFIID to regulate transcription initiation. Requires Mg(2+) as cofactor. In terms of processing, phosphorylated on both serine and threonine residues. Small t antigen inhibits the dephosphorylation by the AC form of PP2A. O-Glycosylated near the C-terminal region. Post-translationally, acetylated by CBP in a TP53-dependent manner.

It is found in the host nucleus. It catalyses the reaction Couples ATP hydrolysis with the unwinding of duplex DNA by translocating in the 3'-5' direction.. It carries out the reaction ATP + H2O = ADP + phosphate + H(+). Isoform large T antigen is a key early protein essential for both driving viral replication and inducing cellular transformation. Plays a role in viral genome replication by driving entry of quiescent cells into the cell cycle and by autoregulating the synthesis of viral early mRNA. Displays highly oncogenic activities by corrupting the host cellular checkpoint mechanisms that guard cell division and the transcription, replication, and repair of DNA. Participates in the modulation of cellular gene expression preceeding viral DNA replication. This step involves binding to host key cell cycle regulators retinoblastoma protein RB1/pRb and TP53. Induces the disassembly of host E2F1 transcription factors from RB1, thus promoting transcriptional activation of E2F1-regulated S-phase genes. Inhibits host TP53 binding to DNA, abrogating the ability of TP53 to stimulate gene expression. Plays the role of a TFIID-associated factor (TAF) in transcription initiation for all three RNA polymerases, by stabilizing the TBP-TFIIA complex on promoters. Initiates viral DNA replication and unwinding via interactions with the viral origin of replication. Binds two adjacent sites in the SV40 origin. The replication fork movement is facilitated by Large T antigen helicase activity. Has processive 3'-5' DNA helicase activity which requires a short 3' single-stranded region and ATP. Activates the transcription of viral late mRNA, through host TBP and TFIIA stabilization. Interferes with histone deacetylation mediated by HDAC1, leading to activation of transcription. The chain is Large T antigen from Chlorocebus aethiops (Green monkey).